A 552-amino-acid polypeptide reads, in one-letter code: Putative E3 ubiquitin-protein ligase ARI6 (552 aa).

A TRIAD supradomain region spans residues 129-343; sequence REFTCGICFE…GGYYACNRYE (215 aa). Zn(2+) is bound by residues Cys133, Cys136, Cys150, His152, Cys155, Cys158, Cys178, Cys183, Cys222, Cys227, Cys245, Cys247, Cys252, Cys255, His260, Cys265, Cys292, and Cys295. The RING-type 1 zinc-finger motif lies at 133-183; that stretch reads CGICFESYPLEETISVSCGHPFCATCWTGYISTSINDGPGCLMLKCPYPCC. Residues 202 to 265 form an IBR-type zinc finger; it reads ERYYRYFLRS…SEEAHRPVDC (64 aa). The RING-type 2; atypical zinc-finger motif lies at 292-322; sequence CPKCKRPIEKNHGCMHMTCTPPCKFEFCWLC. The active site involves Cys305. The Zn(2+) site is built by Cys310, Cys314, Cys319, Cys322, His329, and Cys339. The segment at 518–552 is disordered; that stretch reads HAASSKPANCKPSSNTKDGGKGKKEALTMAGSAET. Residues 519 to 534 are compositionally biased toward polar residues; that stretch reads AASSKPANCKPSSNTK.

Belongs to the RBR family. Ariadne subfamily. The cofactor is Zn(2+).

It carries out the reaction [E2 ubiquitin-conjugating enzyme]-S-ubiquitinyl-L-cysteine + [acceptor protein]-L-lysine = [E2 ubiquitin-conjugating enzyme]-L-cysteine + [acceptor protein]-N(6)-ubiquitinyl-L-lysine.. It functions in the pathway protein modification; protein ubiquitination. In terms of biological role, might act as an E3 ubiquitin-protein ligase, or as part of E3 complex, which accepts ubiquitin from specific E2 ubiquitin-conjugating enzymes and then transfers it to substrates. The protein is Putative E3 ubiquitin-protein ligase ARI6 (ARI6) of Arabidopsis thaliana (Mouse-ear cress).